The following is a 112-amino-acid chain: uncharacterized protein (112 aa).

This is an uncharacterized protein from Gallus gallus (Chicken).